The primary structure comprises 926 residues: Storkhead-box protein 2 (926 aa).

Disordered stretches follow at residues 1-32, 338-394, 452-529, 632-693, 724-803, and 825-926; these read MKKT…RSEK, EEEK…IPGG, EMPF…SYVD, GVKK…SLDK, LKSH…GTMQ, and LAPK…VTSV. Positions 18 to 32 are enriched in basic and acidic residues; sequence FSDRASDRMRSRSEK. Positions 353–378 are enriched in basic residues; that stretch reads HSGRSKKSRTHRKSHGKSRSHSKTRV. Basic and acidic residues predominate over residues 379–394; the sequence is SKGDPSDGSHLDIPGG. Residues 463 to 472 are compositionally biased toward basic residues; sequence SHSKVHRSHS. A compositionally biased stretch (basic and acidic residues) spans 473–495; the sequence is HTQDRRSRNERSNKAKERSRSMD. The segment covering 518 to 529 has biased composition (polar residues); the sequence is QDDQTPSQSYVD. Basic and acidic residues-rich tracts occupy residues 632-658 and 684-693; these read GVKK…EESP and HGAEPSSLDK. A compositionally biased stretch (polar residues) spans 746–772; that stretch reads LGTSAAQATPASQRQQESGGNQETSFD. The segment covering 785-799 has biased composition (basic and acidic residues); sequence GANKNTEEEKNREDV. 2 stretches are compositionally biased toward polar residues: residues 847–884 and 914–926; these read MDSS…QNPA and KPSN…VTSV.

In Macaca fascicularis (Crab-eating macaque), this protein is Storkhead-box protein 2 (STOX2).